Here is a 946-residue protein sequence, read N- to C-terminus: Inter-alpha-trypsin inhibitor heavy chain H2 (946 aa).

The signal sequence occupies residues 1–18 (MKRLTCFFICFFLSEVSG). Residues 19-54 (FEIPINGLSEFVDYEDLVELAPGKFQLVAENRRYQR) constitute a propeptide that is removed on maturation. Positions 56–185 (LPGESEEMME…KVQFELHYQE (130 aa)) constitute a VIT domain. Ser-60 is modified (phosphoserine; by FAM20C). N-linked (GlcNAc...) (complex) asparagine glycosylation is present at Asn-118. Cys-261 and Cys-264 are disulfide-bonded. Residues Glu-282 and Glu-283 each carry the 4-carboxyglutamate modification. Residues 308–468 (PKNILFVIDV…YDFLKRLSNE (161 aa)) form the VWFA domain. The N-linked (GlcNAc...) asparagine glycan is linked to Asn-445. At Ser-466 the chain carries Phosphoserine; by FAM20C. Cys-650 and Cys-651 are joined by a disulfide. Positions 665 to 679 (STPSWANPSPTPVIS) are O-glycosylated at three sites. The O-linked (GalNAc...) threonine; partial glycan is linked to Thr-666. The O-linked (GalNAc...) serine glycan is linked to Ser-673. O-linked (GalNAc...) threonine glycosylation is found at Thr-675 and Thr-691. Asp-702 is modified (aspartate 1-(chondroitin 4-sulfate)-ester). Residues 703–946 (PHFIIYLPKS…PQLYSFLKRP (244 aa)) constitute a propeptide that is removed on maturation. A Phosphoserine; by FAM20C modification is found at Ser-886.

I-alpha-I plasma protease inhibitors are assembled from one or two heavy chains (HC) and one light chain, bikunin. Inter-alpha-inhibitor (I-alpha-I) is composed of ITIH1/HC1, ITIH2/HC2 and bikunin. Heavy chains are linked to bikunin via chondroitin 4-sulfate esterified to the alpha-carboxyl of the C-terminal aspartate after propeptide cleavage. In terms of processing, N- and O-glycosylated. O-glycosylated with core 1 or possibly core 8 glycans. Post-translationally, phosphorylated by FAM20C in the extracellular medium. In terms of tissue distribution, plasma.

Its subcellular location is the secreted. May act as a carrier of hyaluronan in serum or as a binding protein between hyaluronan and other matrix protein, including those on cell surfaces in tissues to regulate the localization, synthesis and degradation of hyaluronan which are essential to cells undergoing biological processes. The chain is Inter-alpha-trypsin inhibitor heavy chain H2 (ITIH2) from Homo sapiens (Human).